Here is a 325-residue protein sequence, read N- to C-terminus: MSTTETTGKSPAKVETGVKLRGAEKVARIPVKVIPTEELPRKPDWIRVRMPASPEVERIKQLLRQHKLHSVCEEASCPNLGECFAGGTATFMIMGDICTRRCPFCDVGHGRPNPLDPDEPKNLAVAVADLRLKYVVITSVDRDDLRDGGAQHFADCLREIRRLSPGTQLETLVPDYRGRMEIALDITAAEPPDVFNHNLETVPRLYKASRPGADFEWSLDLLEAFKKRVPAVPTKSGLMLGLGETDEEVIEVMKRMREHEIDMLTLGQYLQPSRNHLAVQRFVHPDTFAWFAEEGERMGFKNVTSGPLVRSSYHADQQAHGAKGD.

[4Fe-4S] cluster contacts are provided by C72, C77, C83, C98, C102, C105, and S312. The Radical SAM core domain maps to 84 to 301; sequence FAGGTATFMI…AEEGERMGFK (218 aa).

It belongs to the radical SAM superfamily. Lipoyl synthase family. Requires [4Fe-4S] cluster as cofactor.

It is found in the cytoplasm. It carries out the reaction [[Fe-S] cluster scaffold protein carrying a second [4Fe-4S](2+) cluster] + N(6)-octanoyl-L-lysyl-[protein] + 2 oxidized [2Fe-2S]-[ferredoxin] + 2 S-adenosyl-L-methionine + 4 H(+) = [[Fe-S] cluster scaffold protein] + N(6)-[(R)-dihydrolipoyl]-L-lysyl-[protein] + 4 Fe(3+) + 2 hydrogen sulfide + 2 5'-deoxyadenosine + 2 L-methionine + 2 reduced [2Fe-2S]-[ferredoxin]. Its pathway is protein modification; protein lipoylation via endogenous pathway; protein N(6)-(lipoyl)lysine from octanoyl-[acyl-carrier-protein]: step 2/2. Its function is as follows. Catalyzes the radical-mediated insertion of two sulfur atoms into the C-6 and C-8 positions of the octanoyl moiety bound to the lipoyl domains of lipoate-dependent enzymes, thereby converting the octanoylated domains into lipoylated derivatives. The sequence is that of Lipoyl synthase from Azotobacter vinelandii (strain DJ / ATCC BAA-1303).